The chain runs to 434 residues: Probable carboxypeptidase BDCG_03757 (434 aa).

An N-terminal signal peptide occupies residues 1–20; sequence MKLSHLAAALSAQLVAPVAA. 2 N-linked (GlcNAc...) asparagine glycosylation sites follow: Asn-136 and Asn-150. Asp-160 serves as a coordination point for Zn(2+). The active-site Proton acceptor is the Glu-192. Glu-193 is a binding site for Zn(2+). The N-linked (GlcNAc...) asparagine glycan is linked to Asn-343.

The protein belongs to the peptidase M20A family. Zn(2+) serves as cofactor.

The protein resides in the secreted. This chain is Probable carboxypeptidase BDCG_03757, found in Ajellomyces dermatitidis (strain ER-3 / ATCC MYA-2586) (Blastomyces dermatitidis).